A 332-amino-acid polypeptide reads, in one-letter code: UPF0194 membrane protein YbhG (332 aa).

The N-terminal stretch at 1–16 (MMKKPVVIGLAVVVLA) is a signal peptide. Residues 108 to 209 (EEIAQAAAAV…LNLQDSTLIA (102 aa)) are a coiled coil.

Belongs to the UPF0194 family.

The protein localises to the periplasm. This is UPF0194 membrane protein YbhG from Escherichia coli (strain 55989 / EAEC).